A 583-amino-acid chain; its full sequence is Atlastin-2 (583 aa).

Positions M1–E44 are disordered. An N-terminal hypervariable region (HVR) region spans residues M1 to P60. Residues M1 to A476 lie on the Cytoplasmic side of the membrane. S24 carries the phosphoserine modification. A GB1/RHD3-type G domain is found at D91 to N336. The GDP site is built by R104, K105, G106, K107, S108, F109, Q175, R244, and D245. R104, K105, G106, K107, S108, and F109 together coordinate GTP. S108 contributes to the Mg(2+) binding site. Residues R244 and D245 each contribute to the GTP site. Positions L256 to I284 form a coiled coil. K270 is modified (N6-methyllysine). The GDP site is built by V303 and N306. V303 contributes to the GTP binding site. The tract at residues M374–G465 is 3HB (three-helix bundle) domain. Residues K466–T474 are linker. The chain crosses the membrane as a helical span at residues T477–L497. The Lumenal segment spans residues N498–S499. A helical membrane pass occupies residues I500 to Y520. Over V521–D583 the chain is Cytoplasmic. The segment at K547–D583 is autoinhibitory domain.

It belongs to the TRAFAC class dynamin-like GTPase superfamily. GB1/RHD3 GTPase family. GB1 subfamily. As to quaternary structure, monomeric and homodimeric. The homodimer, transiently formed by two molecules on opposing membranes, is the active form mediating ER membrane fusion. Interacts with REEP5 and RTN3; these proteins are involved in endoplasmic reticulum tubular network organization. Interacts with ZFYVE27; both proteins are involved in endoplasmic reticulum tubular network organization. As to expression, expressed in peripheral tissues (at protein level).

The protein resides in the endoplasmic reticulum membrane. The enzyme catalyses GTP + H2O = GDP + phosphate + H(+). With respect to regulation, with its alternative C-terminus disrupting the autoinhibitory domain, this brain-specific isoform is probably more active at fusing ER membranes. In terms of biological role, atlastin-2 (ATL2) is a membrane-anchored GTPase that mediates the GTP-dependent fusion of endoplasmic reticulum (ER) membranes, maintaining the continuous ER network. It facilitates the formation of three-way junctions where ER tubules intersect. Two atlastin-2 on neighboring ER tubules bind GTP and form loose homodimers through the GB1/RHD3-type G domains and 3HB regions. Upon GTP hydrolysis, the 3HB regions tighten, pulling the membranes together to drive their fusion. After fusion, the homodimer disassembles upon release of inorganic phosphate (Pi). Subsequently, GDP dissociates, resetting the monomers to a conformation ready for a new fusion cycle. This chain is Atlastin-2, found in Homo sapiens (Human).